We begin with the raw amino-acid sequence, 357 residues long: Glutamate 5-kinase (357 aa).

Lys-7 is an ATP binding site. 3 residues coordinate substrate: Ser-43, Asp-130, and Asn-142. ATP is bound by residues 162–163 (TD) and 205–211 (TGGMTTK). Positions 270–353 (EGELQLDAGA…PVVVHRDGLV (84 aa)) constitute a PUA domain.

Belongs to the glutamate 5-kinase family.

The protein resides in the cytoplasm. The catalysed reaction is L-glutamate + ATP = L-glutamyl 5-phosphate + ADP. Its pathway is amino-acid biosynthesis; L-proline biosynthesis; L-glutamate 5-semialdehyde from L-glutamate: step 1/2. Its function is as follows. Catalyzes the transfer of a phosphate group to glutamate to form L-glutamate 5-phosphate. This chain is Glutamate 5-kinase, found in Synechococcus sp. (strain CC9605).